The primary structure comprises 259 residues: Hydroxyacylglutathione hydrolase (259 aa).

Residues His-56, His-58, Asp-60, His-61, His-112, Asp-133, and His-171 each contribute to the Zn(2+) site.

It belongs to the metallo-beta-lactamase superfamily. Glyoxalase II family. In terms of assembly, monomer. Zn(2+) is required as a cofactor.

The enzyme catalyses an S-(2-hydroxyacyl)glutathione + H2O = a 2-hydroxy carboxylate + glutathione + H(+). Its pathway is secondary metabolite metabolism; methylglyoxal degradation; (R)-lactate from methylglyoxal: step 2/2. In terms of biological role, thiolesterase that catalyzes the hydrolysis of S-D-lactoyl-glutathione to form glutathione and D-lactic acid. In Pseudomonas putida (strain ATCC 700007 / DSM 6899 / JCM 31910 / BCRC 17059 / LMG 24140 / F1), this protein is Hydroxyacylglutathione hydrolase.